Reading from the N-terminus, the 72-residue chain is Translation initiation factor IF-1 (72 aa).

The S1-like domain maps to 1-72 (MTKEEVLEFP…TKGRITYRFK (72 aa)).

Belongs to the IF-1 family. In terms of assembly, component of the 30S ribosomal translation pre-initiation complex which assembles on the 30S ribosome in the order IF-2 and IF-3, IF-1 and N-formylmethionyl-tRNA(fMet); mRNA recruitment can occur at any time during PIC assembly.

The protein localises to the cytoplasm. Its function is as follows. One of the essential components for the initiation of protein synthesis. Stabilizes the binding of IF-2 and IF-3 on the 30S subunit to which N-formylmethionyl-tRNA(fMet) subsequently binds. Helps modulate mRNA selection, yielding the 30S pre-initiation complex (PIC). Upon addition of the 50S ribosomal subunit IF-1, IF-2 and IF-3 are released leaving the mature 70S translation initiation complex. The polypeptide is Translation initiation factor IF-1 (Agrobacterium fabrum (strain C58 / ATCC 33970) (Agrobacterium tumefaciens (strain C58))).